The following is a 1699-amino-acid chain: Cilia- and flagella-associated protein 61 (1699 aa).

Residues Met-1–Gln-22 are compositionally biased toward polar residues. 3 disordered regions span residues Met-1 to Ser-23, Gln-489 to Lys-515, and Glu-1340 to Gln-1365. Basic residues predominate over residues Gln-489 to Arg-503. Composition is skewed to basic and acidic residues over residues Gln-504 to Lys-515 and Glu-1340 to Asp-1359.

It localises to the cell projection. Its subcellular location is the cilium. In terms of biological role, as component of a spoke-associated complex, regulates ciliary mobility by mediating a stable and functional assembly of the radial spoke 3 (RS3). The protein is Cilia- and flagella-associated protein 61 of Tetrahymena thermophila (strain SB210).